The following is a 256-amino-acid chain: Small ribosomal subunit protein uS2 (256 aa).

The protein belongs to the universal ribosomal protein uS2 family.

The chain is Small ribosomal subunit protein uS2 from Streptococcus equi subsp. equi (strain 4047).